Consider the following 294-residue polypeptide: Hydroxyethylthiazole kinase (294 aa).

M57 contributes to the substrate binding site. R132 and S196 together coordinate ATP. G223 serves as a coordination point for substrate.

It belongs to the Thz kinase family. It depends on Mg(2+) as a cofactor.

It catalyses the reaction 5-(2-hydroxyethyl)-4-methylthiazole + ATP = 4-methyl-5-(2-phosphooxyethyl)-thiazole + ADP + H(+). Its pathway is cofactor biosynthesis; thiamine diphosphate biosynthesis; 4-methyl-5-(2-phosphoethyl)-thiazole from 5-(2-hydroxyethyl)-4-methylthiazole: step 1/1. Catalyzes the phosphorylation of the hydroxyl group of 4-methyl-5-beta-hydroxyethylthiazole (THZ). The protein is Hydroxyethylthiazole kinase of Bifidobacterium adolescentis (strain ATCC 15703 / DSM 20083 / NCTC 11814 / E194a).